Reading from the N-terminus, the 321-residue chain is Cytochrome f (321 aa).

The N-terminal stretch at 1–35 (MQNRNKNNWMKKWVIRSISILIILNIIAWPSISYA) is a signal peptide. Residues Y36, C56, C59, and H60 each contribute to the heme site. The chain crosses the membrane as a helical span at residues 287 to 306 (IQGLLLFFVSVIMAQILLVL).

The protein belongs to the cytochrome f family. The 4 large subunits of the cytochrome b6-f complex are cytochrome b6, subunit IV (17 kDa polypeptide, petD), cytochrome f and the Rieske protein, while the 4 small subunits are PetG, PetL, PetM and PetN. The complex functions as a dimer. The cofactor is heme.

The protein resides in the plastid. The protein localises to the chloroplast thylakoid membrane. Functionally, component of the cytochrome b6-f complex, which mediates electron transfer between photosystem II (PSII) and photosystem I (PSI), cyclic electron flow around PSI, and state transitions. This Psilotum nudum (Whisk fern) protein is Cytochrome f.